The chain runs to 452 residues: Sulfide:quinone oxidoreductase, mitochondrial (452 aa).

Residues 54 to 55 (AG), glutamate 77, glutamine 85, and valine 120 each bind FAD. Cysteine 204 functions as the Cysteine persulfide intermediate in the catalytic mechanism. Cysteine 204 and cysteine 380 are oxidised to a cystine. FAD is bound by residues aspartate 337 and 345–348 (KTAA). Cysteine 380 functions as the Cysteine persulfide intermediate in the catalytic mechanism.

It belongs to the SQRD family. The cofactor is FAD.

It localises to the mitochondrion. It carries out the reaction ubiquinone-10 + hydrogen sulfide + sulfite + 2 H(+) = ubiquinol-10 + thiosulfate. It catalyses the reaction a quinone + hydrogen sulfide + glutathione + H(+) = S-sulfanylglutathione + a quinol. Functionally, catalyzes the oxidation of hydrogen sulfide, with the help of a quinone. The sequence is that of Sulfide:quinone oxidoreductase, mitochondrial from Dictyostelium discoideum (Social amoeba).